The following is a 146-amino-acid chain: uncharacterized protein (146 aa).

The 140-residue stretch at 7–146 (LQINYKTDEL…EGHDILIWNP (140 aa)) folds into the N-acetyltransferase domain.

This is an uncharacterized protein from Staphylococcus epidermidis (strain ATCC 12228 / FDA PCI 1200).